Reading from the N-terminus, the 206-residue chain is High-affinity nitrate transporter-activating protein 2.1 (206 aa).

Residues 1–27 (MARLAGVAALSLVLVLLGAGVPRPAAA) form the signal peptide. A helical transmembrane segment spans residues 180–200 (VAAGVFSTFSIAALAFFFVVE).

This sequence belongs to the NAR2 family. Heterotetramer composed of two NRT2.1, NRT2.2 or NRT2.3 and two NAR2.1. Interacts with NRT2.1, NRT2.2 and isoform 1 of NRT2.3. As to expression, expressed in epidermal cells of primary and lateral roots, root-shoot junction zone, vascular tissues of adventitious root primordia, stems and coleoptiles of germinating seeds.

Its subcellular location is the cell membrane. Its function is as follows. Acts as a dual component transporter with NTR2.1, NRT2.2 and NRT2.3. Required for high-affinity nitrate transport. Involved in the regulation of NRT2.1, NRT2.2 and NRT2.3 expression, and in both, HATS (high-affinity transport system) and LATS (low-affinity transport system) activities in plant roots. Imports nitrate with high affinity when expressed with NTR2.1, NTR2.2 or NTR2.3 in a heterologous system (Xenopus oocytes). This Oryza sativa subsp. japonica (Rice) protein is High-affinity nitrate transporter-activating protein 2.1 (NAR2.1).